The chain runs to 459 residues: MTSRSATATARTSSEARAVARTQTLIKGEHGIGTVRRTTLPGGLRIVTETLPSVRSATFGIWAHVGSRDETPALNGATHYLEHLLFKGTRKRSALDISSAIDAVGGEMNAFTAKEYTCYYARVLDTDLPLAIDVVCDMLTGSLIQEEDVDVERGAILEEIAMTEDDPGDCVHDLFAHTMFGDNALGRPVLGTVDTVNALTADRIRRFYRKHYDPTHLVVAAAGNVDHNKVVRQVRAAFEKSGALKDPAAQPLAPRAGRRTVRAAGRVELIGRKTEQAHVILGMPGLARTDERRWAMGVLNTALGGGMSSRLFQEVREKRGLAYSVYSYTSGFADCGLFGVYAGCRPSQVHDVLKICRDELDHVAEHGLTDDEIGRAVGQLQGSTVLGLEDTGALMNRIGKSELCWGEQMSVDDMLARIASVTPDDVRAVARDVLGRRPSLSVIGPLKDKQASRLHDAVA.

Zn(2+) is bound at residue His79. Glu82 acts as the Proton acceptor in catalysis. The Zn(2+) site is built by His83 and Glu159.

Belongs to the peptidase M16 family. Zn(2+) serves as cofactor.

This is an uncharacterized protein from Streptomyces coelicolor (strain ATCC BAA-471 / A3(2) / M145).